The chain runs to 304 residues: Ribosomal RNA large subunit methyltransferase F (304 aa).

It belongs to the methyltransferase superfamily. METTL16/RlmF family.

Its subcellular location is the cytoplasm. The catalysed reaction is adenosine(1618) in 23S rRNA + S-adenosyl-L-methionine = N(6)-methyladenosine(1618) in 23S rRNA + S-adenosyl-L-homocysteine + H(+). Functionally, specifically methylates the adenine in position 1618 of 23S rRNA. The sequence is that of Ribosomal RNA large subunit methyltransferase F from Klebsiella pneumoniae (strain 342).